Consider the following 347-residue polypeptide: Anthranilate phosphoribosyltransferase (347 aa).

Residues Gly88, Gly91–Asp92, Thr96, Asn98–Thr101, Lys116–Ser124, and Ser128 contribute to the 5-phospho-alpha-D-ribose 1-diphosphate site. Gly88 serves as a coordination point for anthranilate. Ser100 contacts Mg(2+). An anthranilate-binding site is contributed by Asn119. Anthranilate is bound at residue Arg174. Asp232 and Glu233 together coordinate Mg(2+).

The protein belongs to the anthranilate phosphoribosyltransferase family. As to quaternary structure, homodimer. It depends on Mg(2+) as a cofactor.

It catalyses the reaction N-(5-phospho-beta-D-ribosyl)anthranilate + diphosphate = 5-phospho-alpha-D-ribose 1-diphosphate + anthranilate. It participates in amino-acid biosynthesis; L-tryptophan biosynthesis; L-tryptophan from chorismate: step 2/5. Functionally, catalyzes the transfer of the phosphoribosyl group of 5-phosphorylribose-1-pyrophosphate (PRPP) to anthranilate to yield N-(5'-phosphoribosyl)-anthranilate (PRA). The chain is Anthranilate phosphoribosyltransferase from Shewanella sp. (strain ANA-3).